Consider the following 426-residue polypeptide: Serine--tRNA ligase (426 aa).

Residue 231 to 233 participates in L-serine binding; sequence TSE. 262–264 contacts ATP; the sequence is RSE. Glu-285 contributes to the L-serine binding site. 349 to 352 serves as a coordination point for ATP; that stretch reads EISS. Ser-385 serves as a coordination point for L-serine.

Belongs to the class-II aminoacyl-tRNA synthetase family. Type-1 seryl-tRNA synthetase subfamily. Homodimer. The tRNA molecule binds across the dimer.

It is found in the cytoplasm. It carries out the reaction tRNA(Ser) + L-serine + ATP = L-seryl-tRNA(Ser) + AMP + diphosphate + H(+). The enzyme catalyses tRNA(Sec) + L-serine + ATP = L-seryl-tRNA(Sec) + AMP + diphosphate + H(+). Its pathway is aminoacyl-tRNA biosynthesis; selenocysteinyl-tRNA(Sec) biosynthesis; L-seryl-tRNA(Sec) from L-serine and tRNA(Sec): step 1/1. In terms of biological role, catalyzes the attachment of serine to tRNA(Ser). Is also able to aminoacylate tRNA(Sec) with serine, to form the misacylated tRNA L-seryl-tRNA(Sec), which will be further converted into selenocysteinyl-tRNA(Sec). In Legionella pneumophila (strain Paris), this protein is Serine--tRNA ligase.